Consider the following 222-residue polypeptide: N-(5'-phosphoribosyl)anthranilate isomerase (222 aa).

The protein belongs to the TrpF family.

The catalysed reaction is N-(5-phospho-beta-D-ribosyl)anthranilate = 1-(2-carboxyphenylamino)-1-deoxy-D-ribulose 5-phosphate. The protein operates within amino-acid biosynthesis; L-tryptophan biosynthesis; L-tryptophan from chorismate: step 3/5. The polypeptide is N-(5'-phosphoribosyl)anthranilate isomerase (Xanthomonas campestris pv. campestris (strain 8004)).